Consider the following 422-residue polypeptide: DNA-binding transcriptional activator AdeR (422 aa).

It belongs to the CdaR family.

Functionally, activates ald expression in response to alanine availability and is important for normal sporulation in B.subtilis. In Bacillus subtilis (strain 168), this protein is DNA-binding transcriptional activator AdeR.